Here is a 129-residue protein sequence, read N- to C-terminus: Iron-sulfur cluster assembly 1 homolog, mitochondrial (129 aa).

A mitochondrion-targeting transit peptide spans 1–12; it reads MSASLVRATVRA. Residues C57, C121, and C123 each contribute to the Fe cation site.

The protein belongs to the HesB/IscA family. As to quaternary structure, interacts with CRY2, but not with CRY1 (in vitro).

The protein localises to the mitochondrion. Functionally, involved in the maturation of mitochondrial 4Fe-4S proteins functioning late in the iron-sulfur cluster assembly pathway. Probably involved in the binding of an intermediate of Fe/S cluster assembly. The polypeptide is Iron-sulfur cluster assembly 1 homolog, mitochondrial (Isca1) (Mus musculus (Mouse)).